A 205-amino-acid chain; its full sequence is Small ribosomal subunit protein uS4 (205 aa).

Residues 1–16 (MSKRETTKYKIDRRMG) show a composition bias toward basic and acidic residues. Residues 1–46 (MSKRETTKYKIDRRMGENIWGRPKSPVNRRDYGPGQHGQRRKGKLS) are disordered. Residues 94 to 157 (SRLDAVIYRA…KQLVLVLESV (64 aa)) enclose the S4 RNA-binding domain.

This sequence belongs to the universal ribosomal protein uS4 family. Part of the 30S ribosomal subunit. Contacts protein S5. The interaction surface between S4 and S5 is involved in control of translational fidelity.

Functionally, one of the primary rRNA binding proteins, it binds directly to 16S rRNA where it nucleates assembly of the body of the 30S subunit. In terms of biological role, with S5 and S12 plays an important role in translational accuracy. The chain is Small ribosomal subunit protein uS4 from Bartonella henselae (strain ATCC 49882 / DSM 28221 / CCUG 30454 / Houston 1) (Rochalimaea henselae).